The sequence spans 214 residues: Ribonuclease HII (214 aa).

An RNase H type-2 domain is found at 26–214 (EIVCGVDEAG…PVRAALDLIR (189 aa)). The a divalent metal cation site is built by Asp-32, Glu-33, and Asp-124.

The protein belongs to the RNase HII family. Mn(2+) serves as cofactor. Mg(2+) is required as a cofactor.

It localises to the cytoplasm. It catalyses the reaction Endonucleolytic cleavage to 5'-phosphomonoester.. In terms of biological role, endonuclease that specifically degrades the RNA of RNA-DNA hybrids. The chain is Ribonuclease HII from Burkholderia orbicola (strain MC0-3).